Reading from the N-terminus, the 28-residue chain is Dermaseptin-DI2 (28 aa).

As to expression, expressed by the skin glands.

It localises to the secreted. Its function is as follows. Has antibacterial activity against the Gram-positive bacteria S.aureus and E.faecalis, and the Gram-negative bacteria P.aeruginosa and E.coli. Has antiprotozoal activity against T.cruzi. Has antifungal activity against the yeasts C.tropicalis (MIC=10.9 uM), C.guilliermondii (MIC=21.8 uM), C.albicans (MIC=21.8 uM) and C.albicans ATCC 1023 (MIC=10.9 uM). Decreases viability of murine peritoneal cells. Fuses to, and disrupts liposomes. This is Dermaseptin-DI2 from Phyllomedusa distincta (Monkey frog).